The primary structure comprises 92 residues: Large ribosomal subunit protein eL43y (92 aa).

The segment at Cys-39–Cys-60 adopts a C4-type zinc-finger fold.

It belongs to the eukaryotic ribosomal protein eL43 family.

The polypeptide is Large ribosomal subunit protein eL43y (RPL37AC) (Arabidopsis thaliana (Mouse-ear cress)).